Here is a 207-residue protein sequence, read N- to C-terminus: Ribonuclease HII (207 aa).

An RNase H type-2 domain is found at 20–207; that stretch reads QLFAGVDEVG…KPVKRVLGIE (188 aa). The a divalent metal cation site is built by Asp-26, Glu-27, and Asp-118.

Belongs to the RNase HII family. Requires Mn(2+) as cofactor. Mg(2+) is required as a cofactor.

The protein localises to the cytoplasm. The enzyme catalyses Endonucleolytic cleavage to 5'-phosphomonoester.. Endonuclease that specifically degrades the RNA of RNA-DNA hybrids. The sequence is that of Ribonuclease HII from Aliivibrio fischeri (strain ATCC 700601 / ES114) (Vibrio fischeri).